Here is a 178-residue protein sequence, read N- to C-terminus: MSTIAKDQTQINDRIRAKELRLIGHDGEQLGVKTKFEAIEIAERVNLDVVLVAPNAKPPVAKIMDYGKFKFEQQKKEKEARKKQKVVTVKEIRLSPTIEDHDFNTKLKNARKFLEKEDKVKVSIRFRGRAITHKEFGQRVLEKFAEECKDLATVEQKPKMDGRSMFLMLAPIVDKKQN.

It belongs to the IF-3 family. In terms of assembly, monomer.

Its subcellular location is the cytoplasm. Functionally, IF-3 binds to the 30S ribosomal subunit and shifts the equilibrium between 70S ribosomes and their 50S and 30S subunits in favor of the free subunits, thus enhancing the availability of 30S subunits on which protein synthesis initiation begins. The polypeptide is Translation initiation factor IF-3 (Macrococcus caseolyticus (strain JCSC5402) (Macrococcoides caseolyticum)).